The sequence spans 109 residues: FK506-binding protein (109 aa).

Positions 20-108 constitute a PPIase FKBP-type domain; that stretch reads GKEITVHYTG…IFEVELLKVY (89 aa).

Belongs to the FKBP-type PPIase family.

It catalyses the reaction [protein]-peptidylproline (omega=180) = [protein]-peptidylproline (omega=0). In terms of biological role, PPIases accelerate the folding of proteins. The chain is FK506-binding protein (fbp) from Neisseria meningitidis serogroup C.